Here is a 59-residue protein sequence, read N- to C-terminus: Protein HOR7 (59 aa).

The N-terminal stretch at 1–19 (MKLSQVVVSAVAFTGLVSA) is a signal peptide.

It to yeast DDR2.

This Saccharomyces cerevisiae (strain ATCC 204508 / S288c) (Baker's yeast) protein is Protein HOR7 (HOR7).